The primary structure comprises 462 residues: Argininosuccinate lyase (462 aa).

Belongs to the lyase 1 family. Argininosuccinate lyase subfamily.

Its subcellular location is the cytoplasm. It carries out the reaction 2-(N(omega)-L-arginino)succinate = fumarate + L-arginine. Its pathway is amino-acid biosynthesis; L-arginine biosynthesis; L-arginine from L-ornithine and carbamoyl phosphate: step 3/3. The polypeptide is Argininosuccinate lyase (Hydrogenovibrio crunogenus (strain DSM 25203 / XCL-2) (Thiomicrospira crunogena)).